The primary structure comprises 574 residues: Iron hydrogenase 1 (574 aa).

Residues 1–78 (MKTIIINGVQ…GMIINTNSDA (78 aa)) form the 2Fe-2S ferredoxin-type domain. [2Fe-2S] cluster contacts are provided by Cys34, Cys46, Cys49, and Cys62. The region spanning 78–117 (AVNEKIKSRISQLLDIHEFKCGPCNRRENCEFLKLVIKYK) is the 4Fe-4S His(Cys)3-ligated-type domain. Residues His94, Cys98, Cys101, Cys107, Cys147, Cys150, Cys153, Cys157, Cys190, Cys193, Cys196, Cys200, Cys300, Cys355, Cys499, and Cys503 each coordinate [4Fe-4S] cluster. 4Fe-4S ferredoxin-type domains are found at residues 138-167 (KSLTVDRTKCLLCGRCVNACGKNTETYAMK) and 181-210 (DEKCFDDTNCLLCGQCIIACPVAALSEKSH). Cys503 contributes to the Fe(2+) binding site.

In terms of assembly, monomer. [2Fe-2S] cluster is required as a cofactor. The cofactor is [4Fe-4S] cluster. Requires Fe(2+) as cofactor.

It carries out the reaction H2 + 2 oxidized [2Fe-2S]-[ferredoxin] = 2 reduced [2Fe-2S]-[ferredoxin] + 2 H(+). This chain is Iron hydrogenase 1, found in Clostridium pasteurianum.